Here is a 309-residue protein sequence, read N- to C-terminus: NAD kinase (309 aa).

The active-site Proton acceptor is the aspartate 89. Residues 89–90 (DG), 163–164 (NE), histidine 174, arginine 191, aspartate 193, and 204–209 (TAYSLS) contribute to the NAD(+) site.

The protein belongs to the NAD kinase family. Requires a divalent metal cation as cofactor.

The protein localises to the cytoplasm. It carries out the reaction NAD(+) + ATP = ADP + NADP(+) + H(+). In terms of biological role, involved in the regulation of the intracellular balance of NAD and NADP, and is a key enzyme in the biosynthesis of NADP. Catalyzes specifically the phosphorylation on 2'-hydroxyl of the adenosine moiety of NAD to yield NADP. The protein is NAD kinase of Shewanella frigidimarina (strain NCIMB 400).